The chain runs to 940 residues: BTB/POZ domain-containing protein FBL11 (940 aa).

One can recognise a BTB domain in the interval 41–109 (WDMSEILSYG…LYGYDIEITS (69 aa)). The region spanning 155–258 (IQIWSFGLEH…FSLLPLWFIA (104 aa)) is the BACK domain.

Its pathway is protein modification; protein ubiquitination. In terms of biological role, may act as a substrate-specific adapter of an E3 ubiquitin-protein ligase complex (CUL3-RBX1-BTB) which mediates the ubiquitination and subsequent proteasomal degradation of target proteins. This Arabidopsis thaliana (Mouse-ear cress) protein is BTB/POZ domain-containing protein FBL11 (FBL11).